The primary structure comprises 368 residues: Trans-enoyl reductase thnE (368 aa).

53 to 56 (VDVK) serves as a coordination point for NADP(+). A substrate-binding site is contributed by 140-147 (LATATAAY). NADP(+)-binding positions include 179 to 182 (STAT), 202 to 205 (SPSN), tyrosine 220, and 267 to 268 (VE). 289–293 (VMTVW) contacts substrate. Position 358 to 359 (358 to 359 (PS)) interacts with NADP(+).

The protein belongs to the zinc-containing alcohol dehydrogenase family. In terms of assembly, monomer.

The catalysed reaction is malate + 6 malonyl-CoA + acetyl-CoA + 2 AH2 + 2 S-adenosyl-L-methionine + 5 NADPH + 9 H(+) = trihazone A + 2 A + 2 S-adenosyl-L-homocysteine + 6 CO2 + 5 NADP(+) + 7 CoA + 6 H2O. Its pathway is secondary metabolite biosynthesis. Functionally, trans-enoyl reductase; part of the gene cluster that produces the tetronate natural products trihazones. The PKS-NRPS synthetase thnA with the help of the trans-enoyl reductase thnE are responsible for the synthesis of the carboxylmethyl containing trihazone A. The PKS portion of thnA synthesizes beta-keto-triene chain from one acetyl-CoA and 6 equivalents of malonyl-CoA, in collaboration with thnE, which selectively reduces the enoyl intermediate during the first and fourth iteration of the PKS. The NRPS domain selects and activates malate, of which the alpha-hydroxyl group attacks the completed polyketide acyl-S-ACP chain to form the ester product. Intramolecular Dieckmann cyclization catalyzed by the terminal reductase domain releases the product as trihazone A from the PKS-NPRS. The pathway begins with the formation of trihazone A by the hybrid PKS-NRPS synthetase thnA and the trans-enoyl reductase thnE. Trihazone A is further decarboxylated by the 2-oxoglutarate-dependent dioxygenase thnC to produce trihazone D. The function of the FAD-dependent monooxygenase thnD has still to be identified. This is Trans-enoyl reductase thnE from Trichoderma harzianum (Hypocrea lixii).